Reading from the N-terminus, the 382-residue chain is ATP phosphoribosyltransferase regulatory subunit (382 aa).

It belongs to the class-II aminoacyl-tRNA synthetase family. HisZ subfamily. In terms of assembly, heteromultimer composed of HisG and HisZ subunits.

It is found in the cytoplasm. The protein operates within amino-acid biosynthesis; L-histidine biosynthesis; L-histidine from 5-phospho-alpha-D-ribose 1-diphosphate: step 1/9. Required for the first step of histidine biosynthesis. May allow the feedback regulation of ATP phosphoribosyltransferase activity by histidine. This is ATP phosphoribosyltransferase regulatory subunit from Albidiferax ferrireducens (strain ATCC BAA-621 / DSM 15236 / T118) (Rhodoferax ferrireducens).